The primary structure comprises 340 residues: ATP-dependent 6-phosphofructokinase (340 aa).

G11 is an ATP binding site. 21–25 (RAVVR) contributes to the ADP binding site. ATP-binding positions include 72–73 (RY) and 102–105 (GDGS). D103 lines the Mg(2+) pocket. Residue 125 to 127 (TID) participates in substrate binding. Catalysis depends on D127, which acts as the Proton acceptor. R154 contacts ADP. Substrate is bound by residues R162 and 169–171 (MGR). Residues 185–187 (GAD) and 213–215 (KHH) contribute to the ADP site. Residues E222, R244, and 250 to 253 (HLLR) each bind substrate.

This sequence belongs to the phosphofructokinase type A (PFKA) family. ATP-dependent PFK group I subfamily. Prokaryotic clade 'B1' sub-subfamily. Homotetramer. Requires Mg(2+) as cofactor.

The protein localises to the cytoplasm. The enzyme catalyses beta-D-fructose 6-phosphate + ATP = beta-D-fructose 1,6-bisphosphate + ADP + H(+). The protein operates within carbohydrate degradation; glycolysis; D-glyceraldehyde 3-phosphate and glycerone phosphate from D-glucose: step 3/4. With respect to regulation, allosterically activated by ADP and other diphosphonucleosides, and allosterically inhibited by phosphoenolpyruvate. In terms of biological role, catalyzes the phosphorylation of D-fructose 6-phosphate to fructose 1,6-bisphosphate by ATP, the first committing step of glycolysis. The chain is ATP-dependent 6-phosphofructokinase from Streptococcus agalactiae serotype Ia (strain ATCC 27591 / A909 / CDC SS700).